A 954-amino-acid polypeptide reads, in one-letter code: Translation initiation factor IF-2 (954 aa).

The segment covering 56–75 has biased composition (low complexity); sequence KAAAPAAPKAPAPAAESRPA. Residues 56 to 355 form a disordered region; the sequence is KAAAPAAPKA…GVSVPRGDGN (300 aa). Pro residues predominate over residues 76–87; that stretch reads APAPGPAAPKAP. Composition is skewed to low complexity over residues 88–125 and 138–151; these read APKV…KPGA and PRQG…SAPR. The segment covering 241–254 has biased composition (pro residues); the sequence is PGAPRPGGPRPTPG. Positions 269-322 are enriched in gly residues; that stretch reads GRPGGGGRGPGRPGAPGTGGPGGGGGAPAGGGFGKGGRGRGGTQGAFGKGGAGR. The segment covering 323–332 has biased composition (basic residues); it reads GKQRKSKRAK. Positions 447–618 constitute a tr-type G domain; that stretch reads PRAPVVTVMG…AVLLTADAAL (172 aa). Residues 456-463 form a G1 region; sequence GHVDHGKT. 456–463 contacts GTP; the sequence is GHVDHGKT. Residues 481–485 form a G2 region; it reads GITQH. The interval 506 to 509 is G3; it reads DTPG. GTP contacts are provided by residues 506-510 and 560-563; these read DTPGH and NKID. The interval 560 to 563 is G4; it reads NKID. The tract at residues 596-598 is G5; the sequence is SAR.

This sequence belongs to the TRAFAC class translation factor GTPase superfamily. Classic translation factor GTPase family. IF-2 subfamily.

Its subcellular location is the cytoplasm. Functionally, one of the essential components for the initiation of protein synthesis. Protects formylmethionyl-tRNA from spontaneous hydrolysis and promotes its binding to the 30S ribosomal subunits. Also involved in the hydrolysis of GTP during the formation of the 70S ribosomal complex. In Pseudarthrobacter chlorophenolicus (strain ATCC 700700 / DSM 12829 / CIP 107037 / JCM 12360 / KCTC 9906 / NCIMB 13794 / A6) (Arthrobacter chlorophenolicus), this protein is Translation initiation factor IF-2.